A 277-amino-acid polypeptide reads, in one-letter code: Large ribosomal subunit protein uL2 (277 aa).

A disordered region spans residues G222–K277.

This sequence belongs to the universal ribosomal protein uL2 family. As to quaternary structure, part of the 50S ribosomal subunit. Forms a bridge to the 30S subunit in the 70S ribosome.

Its function is as follows. One of the primary rRNA binding proteins. Required for association of the 30S and 50S subunits to form the 70S ribosome, for tRNA binding and peptide bond formation. It has been suggested to have peptidyltransferase activity; this is somewhat controversial. Makes several contacts with the 16S rRNA in the 70S ribosome. This is Large ribosomal subunit protein uL2 from Clostridium kluyveri (strain NBRC 12016).